Reading from the N-terminus, the 186-residue chain is MSVREVYQKIEPRMKKTIEAFQHEIASIRTGKATTALLDRVKVEAYGQQMPLKQVGNISVLDVHTLIVQIWDKSMVSATERAIRDANLGLNPAADGQNIRVSIPPLTEERRKEFVKLTKKFGEDSKVSLRNLRRDMIQEIEKLEKSKAISEDDKNKGKKDADEMLHKFEKQLTELIVHKEKEIMEV.

The protein belongs to the RRF family.

It localises to the cytoplasm. In terms of biological role, responsible for the release of ribosomes from messenger RNA at the termination of protein biosynthesis. May increase the efficiency of translation by recycling ribosomes from one round of translation to another. This Pelodictyon phaeoclathratiforme (strain DSM 5477 / BU-1) protein is Ribosome-recycling factor.